We begin with the raw amino-acid sequence, 345 residues long: Anthranilate phosphoribosyltransferase (345 aa).

5-phospho-alpha-D-ribose 1-diphosphate is bound by residues Gly-80, 83–84 (GD), Thr-88, 90–93 (NIST), 108–116 (KHGNRSVSS), and Ser-120. Gly-80 contributes to the anthranilate binding site. Position 92 (Ser-92) interacts with Mg(2+). Asn-111 is a binding site for anthranilate. Position 166 (Arg-166) interacts with anthranilate. Mg(2+) contacts are provided by Asp-225 and Glu-226.

This sequence belongs to the anthranilate phosphoribosyltransferase family. Homodimer. Mg(2+) is required as a cofactor.

It catalyses the reaction N-(5-phospho-beta-D-ribosyl)anthranilate + diphosphate = 5-phospho-alpha-D-ribose 1-diphosphate + anthranilate. It functions in the pathway amino-acid biosynthesis; L-tryptophan biosynthesis; L-tryptophan from chorismate: step 2/5. In terms of biological role, catalyzes the transfer of the phosphoribosyl group of 5-phosphorylribose-1-pyrophosphate (PRPP) to anthranilate to yield N-(5'-phosphoribosyl)-anthranilate (PRA). This chain is Anthranilate phosphoribosyltransferase, found in Acetivibrio thermocellus (strain ATCC 27405 / DSM 1237 / JCM 9322 / NBRC 103400 / NCIMB 10682 / NRRL B-4536 / VPI 7372) (Clostridium thermocellum).